The chain runs to 181 residues: Adenine phosphoribosyltransferase (181 aa).

It belongs to the purine/pyrimidine phosphoribosyltransferase family. As to quaternary structure, homodimer.

The protein resides in the cytoplasm. It carries out the reaction AMP + diphosphate = 5-phospho-alpha-D-ribose 1-diphosphate + adenine. It participates in purine metabolism; AMP biosynthesis via salvage pathway; AMP from adenine: step 1/1. Functionally, catalyzes a salvage reaction resulting in the formation of AMP, that is energically less costly than de novo synthesis. The sequence is that of Adenine phosphoribosyltransferase from Mesorhizobium japonicum (strain LMG 29417 / CECT 9101 / MAFF 303099) (Mesorhizobium loti (strain MAFF 303099)).